Consider the following 416-residue polypeptide: NADH-quinone oxidoreductase subunit D (416 aa).

It belongs to the complex I 49 kDa subunit family. In terms of assembly, NDH-1 is composed of 14 different subunits. Subunits NuoB, C, D, E, F, and G constitute the peripheral sector of the complex.

The protein localises to the cell inner membrane. It carries out the reaction a quinone + NADH + 5 H(+)(in) = a quinol + NAD(+) + 4 H(+)(out). In terms of biological role, NDH-1 shuttles electrons from NADH, via FMN and iron-sulfur (Fe-S) centers, to quinones in the respiratory chain. The immediate electron acceptor for the enzyme in this species is believed to be ubiquinone. Couples the redox reaction to proton translocation (for every two electrons transferred, four hydrogen ions are translocated across the cytoplasmic membrane), and thus conserves the redox energy in a proton gradient. The sequence is that of NADH-quinone oxidoreductase subunit D from Rhodopseudomonas palustris (strain BisB5).